The primary structure comprises 294 residues: Histone deacetylase HDT3 (294 aa).

N-acetylmethionine is present on M1. Residues 2 to 5 (EFWG) are required to repress transcription. The segment at 124–269 (QVNFQLPNED…TPKSAGAFGC (146 aa)) is disordered. Residues 140–188 (DDADGSEEDSSDDDDSENSGDEEEEKVTAESDSEEDDSSDDEEDDSSEE) are compositionally biased toward acidic residues. The segment covering 189 to 202 (ETPKKPEEPKKRSA) has biased composition (basic and acidic residues). The span at 203 to 213 (EPNSSKNPASN) shows a compositional bias: low complexity. A compositionally biased stretch (polar residues) spans 252–262 (GETSKQQQTPK). The segment at 267-290 (FGCKSCTRTFTSEMGLQSHTKAKH) adopts a C2H2-type zinc-finger fold.

Belongs to the histone deacetylase HD2 family. In terms of assembly, interacts with DNMT2. In terms of tissue distribution, expressed in leaves, roots, stems, young plantlets, flowers and siliques. Highest levels in ovules, embryos, shoot apical meristems and first leaves. Also expressed in somatic embryos.

Its subcellular location is the nucleus. It localises to the nucleolus. Functionally, probably mediates the deacetylation of lysine residues on the N-terminal part of the core histones (H2A, H2B, H3 and H4). Histone deacetylation gives a tag for epigenetic repression and plays an important role in transcriptional regulation, cell cycle progression and developmental events. Involved in the modulation of abscisic acid and stress-responsive genes. This is Histone deacetylase HDT3 (HDT3) from Arabidopsis thaliana (Mouse-ear cress).